The following is a 171-amino-acid chain: Co-chaperone protein HscB (171 aa).

A J domain is found at 2–74; it reads DYFTLFGLPA…LTRAEYLLSL (73 aa).

The protein belongs to the HscB family. As to quaternary structure, interacts with HscA and stimulates its ATPase activity. Interacts with IscU.

Co-chaperone involved in the maturation of iron-sulfur cluster-containing proteins. Seems to help targeting proteins to be folded toward HscA. The polypeptide is Co-chaperone protein HscB (Klebsiella pneumoniae (strain 342)).